The following is a 669-amino-acid chain: Zinc finger MYM-type protein 5 (669 aa).

Glycyl lysine isopeptide (Lys-Gly) (interchain with G-Cter in SUMO2) cross-links involve residues Lys-88, Lys-91, Lys-134, Lys-149, Lys-166, and Lys-225. 4 MYM-type zinc fingers span residues 265–299 (HLFC…KKAN), 311–351 (QEFY…RHEV), 358–393 (HKLC…KSTG), and 404–431 (KRFC…ASEN). Glycyl lysine isopeptide (Lys-Gly) (interchain with G-Cter in SUMO2) cross-links involve residues Lys-443, Lys-455, Lys-462, and Lys-552.

As to quaternary structure, interacts (via N-terminal 120 amino acid region) with ETV5 (via C-terminal).

It localises to the nucleus. In terms of biological role, functions as a transcriptional regulator. The sequence is that of Zinc finger MYM-type protein 5 (ZMYM5) from Homo sapiens (Human).